Consider the following 54-residue polypeptide: Ribulose bisphosphate carboxylase large chain (54 aa).

A propeptide spanning residues Met-1–Ser-2 is cleaved from the precursor. The residue at position 3 (Pro-3) is an N-acetylproline. The residue at position 14 (Lys-14) is an N6,N6,N6-trimethyllysine.

This sequence belongs to the RuBisCO large chain family. Type I subfamily. Heterohexadecamer of 8 large chains and 8 small chains.

The protein resides in the plastid. It localises to the chloroplast. It catalyses the reaction 2 (2R)-3-phosphoglycerate + 2 H(+) = D-ribulose 1,5-bisphosphate + CO2 + H2O. It carries out the reaction D-ribulose 1,5-bisphosphate + O2 = 2-phosphoglycolate + (2R)-3-phosphoglycerate + 2 H(+). Functionally, ruBisCO catalyzes two reactions: the carboxylation of D-ribulose 1,5-bisphosphate, the primary event in carbon dioxide fixation, as well as the oxidative fragmentation of the pentose substrate in the photorespiration process. Both reactions occur simultaneously and in competition at the same active site. The protein is Ribulose bisphosphate carboxylase large chain (rbcL) of Ilex ciliospinosa (Sichuan holly).